The primary structure comprises 415 residues: von Willebrand factor A domain-containing protein 1 (415 aa).

The N-terminal stretch at 1-18 (MLFWTAFSMALSLRLALA) is a signal peptide. One can recognise a VWFA domain in the interval 34–209 (DLLFLLDSSA…IIARELRGSI (176 aa)). Ser-74, Ser-80, and Ser-93 each carry phosphoserine. Fibronectin type-III domains are found at residues 214–305 (QPQQ…LQEE) and 307–403 (GPER…TRAP). Asn-264 carries N-linked (GlcNAc...) asparagine glycosylation. Cys-369 and Cys-393 are disulfide-bonded. Residues 391 to 415 (KACTASGARTRAPQSMRPEAGPREP) are disordered.

As to quaternary structure, homodimer or homomultimer; disulfide-linked. Interacts with HSPG2. Post-translationally, N-glycosylated. Expressed at high levels in the chondrocytes. Detected in the vasculature of neural tissues, in basement membrane structures of the peripheral nervous system, in the apical ectodermal ridge of developing limb buds, and in skeletal and cardiac muscle (at protein level).

It localises to the secreted. Its subcellular location is the extracellular space. It is found in the extracellular matrix. The protein resides in the basement membrane. In terms of biological role, promotes matrix assembly. Involved in the organization of skeletal muscles and in the formation of neuromuscular junctions. The chain is von Willebrand factor A domain-containing protein 1 (Vwa1) from Mus musculus (Mouse).